The chain runs to 468 residues: Glutamate--tRNA ligase (468 aa).

Positions 12 to 22 match the 'HIGH' region motif; that stretch reads PSPTGFIHLGN. The 'KMSKS' region motif lies at 244 to 248; it reads KMSKR. K247 is a binding site for ATP.

Belongs to the class-I aminoacyl-tRNA synthetase family. Glutamate--tRNA ligase type 1 subfamily. Monomer.

The protein resides in the cytoplasm. It catalyses the reaction tRNA(Glu) + L-glutamate + ATP = L-glutamyl-tRNA(Glu) + AMP + diphosphate. Functionally, catalyzes the attachment of glutamate to tRNA(Glu) in a two-step reaction: glutamate is first activated by ATP to form Glu-AMP and then transferred to the acceptor end of tRNA(Glu). This Polynucleobacter asymbioticus (strain DSM 18221 / CIP 109841 / QLW-P1DMWA-1) (Polynucleobacter necessarius subsp. asymbioticus) protein is Glutamate--tRNA ligase.